The sequence spans 1149 residues: cGMP-specific 3',5'-cyclic phosphodiesterase (1149 aa).

Composition is skewed to low complexity over residues 1 to 19 (MHGT…DVSS) and 31 to 47 (ATSS…ASSS). The disordered stretch occupies residues 1–175 (MHGTVSRSSS…STTASQQDVD (175 aa)). Positions 48-59 (KPLTNGANKTAI) are enriched in polar residues. Residues 60 to 85 (STAAGVTPGAAPGPGCAAIPASGSSG) show a composition bias toward low complexity. A compositionally biased stretch (polar residues) spans 96–108 (QSNNNRPAGSNRS). Residues 132 to 158 (SSSSPSQSPSQSQSQSQASIQTQTSQQ) show a composition bias toward low complexity. GAF domains follow at residues 278–430 (DIDV…GIGI) and 462–643 (NLEC…GLGI). A PDEase domain is found at 673–996 (SQDQTEKLTQ…RNWQDLAEKV (324 aa)). The active-site Proton donor is the His749. A divalent metal cation contacts are provided by His753, His789, Asp790, and Asp900. Disordered regions lie at residues 1037–1066 (QQSQ…TGAL) and 1096–1149 (SHVS…CALL). Basic and acidic residues-rich tracts occupy residues 1042-1053 (GSEDSHTPEHQR) and 1096-1106 (SHVSEDMDDKS). Positions 1115–1135 (ASGSMGRMSASSSTSSAGGQM) are enriched in low complexity. The span at 1139–1149 (SKKRSKLCALL) shows a compositional bias: basic residues. Cys1146 is modified (cysteine methyl ester). Cys1146 is lipidated: S-farnesyl cysteine. A propeptide spans 1147–1149 (ALL) (removed in mature form).

The protein belongs to the cyclic nucleotide phosphodiesterase family. In terms of assembly, interacts with PrBP. Requires a divalent metal cation as cofactor.

The protein localises to the cell membrane. It catalyses the reaction 3',5'-cyclic GMP + H2O = GMP + H(+). Its function is as follows. Has a role regulating cGMP transport in Malpighian tubule principal cells. The polypeptide is cGMP-specific 3',5'-cyclic phosphodiesterase (Drosophila yakuba (Fruit fly)).